A 358-amino-acid polypeptide reads, in one-letter code: Testis-specific serine/threonine-protein kinase 2 (358 aa).

The region spanning 12–272 (YIVGINLGKG…IDEILSHSWL (261 aa)) is the Protein kinase domain. Residues 18 to 26 (LGKGSYAKV) and lysine 41 each bind ATP. Catalysis depends on aspartate 136, which acts as the Proton acceptor. 2 stretches are compositionally biased toward basic and acidic residues: residues 296-315 (DCKL…DHKL) and 329-358 (NEDR…KAST). Residues 296-358 (DCKLDTRPGS…SGAEVEKAST (63 aa)) are disordered.

It belongs to the protein kinase superfamily. CAMK Ser/Thr protein kinase family. In terms of assembly, interacts with TSSK1B. Interacts with HSP90; this interaction stabilizes TSSK2. It depends on Mg(2+) as a cofactor. Post-translationally, autophosphorylated. In terms of processing, ubiquitinated; HSP90 activity negatively regulates ubiquitination and degradation. In terms of tissue distribution, testis-specific. Expressed only in the spermatids postmeiotically at the final stages of cytodifferentiation in the seminiferous tubules (at protein level). Not detected in released sperms in the lumen of the seminiferous tubules. Also present in the epididymal sperm (at protein level).

It localises to the cytoplasm. The protein resides in the cytoskeleton. It is found in the microtubule organizing center. The protein localises to the centrosome. Its subcellular location is the centriole. It localises to the cytoplasmic vesicle. The protein resides in the secretory vesicle. It is found in the acrosome. The enzyme catalyses L-seryl-[protein] + ATP = O-phospho-L-seryl-[protein] + ADP + H(+). The catalysed reaction is L-threonyl-[protein] + ATP = O-phospho-L-threonyl-[protein] + ADP + H(+). Activated by phosphorylation on Thr-174, potentially by autophosphorylation. Its function is as follows. Testis-specific serine/threonine-protein kinase required during spermatid development. Phosphorylates 'Ser-281' of TSKS and SPAG16. Involved in the late stages of spermatogenesis, during the reconstruction of the cytoplasm. During spermatogenesis, required for the transformation of a ring-shaped structure around the base of the flagellum originating from the chromatoid body. The polypeptide is Testis-specific serine/threonine-protein kinase 2 (Tssk2) (Mus musculus (Mouse)).